The chain runs to 222 residues: MREQIKQDIDLIEILFYLKKKIRVILFIMAICMAMVLLFLYINKDNIKVIYSLKINQTTPGILVSCDSNNNFACQTTMTEDVIQRITTFFHTSPDVKNREIRLEWSGDKRALPTAEEEISRVQASIIKWYASEYHNGRQVLDEIQTPSAINSELYTKMIYLTRNWSLYPNGDGCVTISSPEIKNKYPAAICLALGFFLSIVISVMFCLVKKMVDEYQQNSGQ.

The next 2 helical transmembrane spans lie at 22-42 and 189-209; these read IRVI…FLYI and AICL…FCLV.

It localises to the cell membrane. This is an uncharacterized protein from Escherichia coli (strain K12).